Reading from the N-terminus, the 435-residue chain is Ribosomal protein uS12 methylthiotransferase RimO (435 aa).

The MTTase N-terminal domain maps to 3–113; the sequence is HKVGFVSLGC…VVNAVHQHLP (111 aa). [4Fe-4S] cluster contacts are provided by Cys-12, Cys-48, Cys-77, Cys-144, Cys-148, and Cys-151. Residues 130-367 enclose the Radical SAM core domain; the sequence is LTPRHYAYLK…MQVQAEISRN (238 aa). The 66-residue stretch at 370 to 435 folds into the TRAM domain; the sequence is KNKIGSTQTV…DDYDLYASLV (66 aa).

It belongs to the methylthiotransferase family. RimO subfamily. It depends on [4Fe-4S] cluster as a cofactor.

The protein localises to the cytoplasm. It carries out the reaction L-aspartate(89)-[ribosomal protein uS12]-hydrogen + (sulfur carrier)-SH + AH2 + 2 S-adenosyl-L-methionine = 3-methylsulfanyl-L-aspartate(89)-[ribosomal protein uS12]-hydrogen + (sulfur carrier)-H + 5'-deoxyadenosine + L-methionine + A + S-adenosyl-L-homocysteine + 2 H(+). In terms of biological role, catalyzes the methylthiolation of an aspartic acid residue of ribosomal protein uS12. This Legionella pneumophila (strain Lens) protein is Ribosomal protein uS12 methylthiotransferase RimO.